Reading from the N-terminus, the 473-residue chain is Glutathione reductase, mitochondrial (473 aa).

Residues S30 and G31 each contribute to the FAD site. S30 provides a ligand contact to glutathione. R37 is a glutathione binding site. FAD-binding residues include E50, T57, C58, and K66. A disulfide bridge links C58 with C63. Y114 serves as a coordination point for glutathione. A130 lines the FAD pocket. Residues A190, I193, E196, R213, R219, and G279 each coordinate NADP(+). An FAD-binding site is contributed by D320. L326 contacts NADP(+). An FAD-binding site is contributed by T328. Residue R336 coordinates glutathione. V359 lines the NADP(+) pocket. FAD is bound at residue H456. H456 functions as the Proton acceptor in the catalytic mechanism.

This sequence belongs to the class-I pyridine nucleotide-disulfide oxidoreductase family. It depends on FAD as a cofactor. Expressed at all larval stages and in adults in intestine, vulva muscle, pharynx and some cells in the tail.

It is found in the cytoplasm. It localises to the mitochondrion. It catalyses the reaction 2 glutathione + NADP(+) = glutathione disulfide + NADPH + H(+). In terms of biological role, catalyzes the reduction of glutathione disulfide (GSSG) to reduced glutathione (GSH). Constitutes the major mechanism to maintain a high GSH:GSSG ratio in the cytosol. Involved in resistance to oxidative stress and starvation. Together with thioredoxin reductase txtr-1, required for the reduction of disulfide groups in the cuticle during molting. The chain is Glutathione reductase, mitochondrial from Caenorhabditis elegans.